The chain runs to 360 residues: uncharacterized protein (360 aa).

Transmembrane regions (helical) follow at residues 12-32 (ILPL…ITQI), 52-72 (VVLV…VIAV), 96-116 (IQLA…AYYI), 278-298 (IIWP…FLRY), 306-326 (FMPV…HFIL), and 336-356 (FIFA…YLLV).

Its subcellular location is the cell membrane. This is an uncharacterized protein from Rickettsia prowazekii (strain Madrid E).